A 1553-amino-acid polypeptide reads, in one-letter code: Probable serine/threonine-protein kinase qkgA (1553 aa).

A disordered region spans residues 113-142 (SSSSSSSSTSSSPSLTSSPSSPISTSPPYH). LRR repeat units follow at residues 287-309 (NGTFLLLSKSNITRFPMSIINMC), 311-333 (QLVELDMSNNRITEIPIEITELK), 334-356 (FLKNLNLSDNLINDIPLEICNLT), and 357-378 (LLKVLLLNENPLNNFPSSIVEL). A Roc domain is found at 395–619 (SCETWNKVKL…KRLIHESEKS (225 aa)). 3 disordered regions span residues 643–696 (NQGR…QQQQ), 955–1019 (ISNS…PSSQ), and 1048–1090 (NQNG…NNNK). 4 stretches are compositionally biased toward low complexity: residues 648–675 (SISNSASNSSSSLLNSSSSSSPSLTSKK), 683–696 (SQQQQQQHQQQQQQ), 956–1018 (SNST…SPSS), and 1059–1090 (TTTTTSTSTSTTSTTTPTTTTPTIPIKNNNNK). Residues 694–893 (QQQLQQSIKE…KTYWKDGVLL (200 aa)) form the COR domain. The Protein kinase domain occupies 1242–1546 (ILYERQIGEG…QTSYFDSPFL (305 aa)). ATP-binding positions include 1248–1256 (IGEGGFGLI) and Lys-1271. Catalysis depends on Asp-1393, which acts as the Proton acceptor.

Belongs to the protein kinase superfamily. TKL Ser/Thr protein kinase family. ROCO subfamily.

It carries out the reaction L-seryl-[protein] + ATP = O-phospho-L-seryl-[protein] + ADP + H(+). The catalysed reaction is L-threonyl-[protein] + ATP = O-phospho-L-threonyl-[protein] + ADP + H(+). Involved in growth, and during development, in aggregation. The sequence is that of Probable serine/threonine-protein kinase qkgA (qkgA-1) from Dictyostelium discoideum (Social amoeba).